We begin with the raw amino-acid sequence, 159 residues long: uncharacterized protein (159 aa).

Residues 1 to 13 are compositionally biased toward polar residues; that stretch reads MTQPTRPSVTCDQ. Residues 1 to 57 are disordered; sequence MTQPTRPSVTCDQGSSTIGGTAAQATTSSSATSGSNYQRDRLGRRPEIGVGGQPQIC. The segment covering 14-35 has biased composition (low complexity); that stretch reads GSSTIGGTAAQATTSSSATSGS. Residues 38 to 47 are compositionally biased toward basic and acidic residues; it reads QRDRLGRRPE.

This is an uncharacterized protein from Homo sapiens (Human).